The primary structure comprises 208 residues: Small ribosomal subunit protein uS4 (208 aa).

The disordered stretch occupies residues 30-49 (EKRPYAPGEHGRDRRRTESD). The region spanning 95-161 (TRLDNLVLRA…VPFQIAAEGV (67 aa)) is the S4 RNA-binding domain.

The protein belongs to the universal ribosomal protein uS4 family. In terms of assembly, part of the 30S ribosomal subunit. Contacts protein S5. The interaction surface between S4 and S5 is involved in control of translational fidelity.

One of the primary rRNA binding proteins, it binds directly to 16S rRNA where it nucleates assembly of the body of the 30S subunit. Its function is as follows. With S5 and S12 plays an important role in translational accuracy. In Bifidobacterium longum (strain DJO10A), this protein is Small ribosomal subunit protein uS4.